The chain runs to 168 residues: G/U mismatch-specific DNA glycosylase (168 aa).

The protein belongs to the uracil-DNA glycosylase (UDG) superfamily. TDG/mug family. As to quaternary structure, binds DNA as a monomer.

Its subcellular location is the cytoplasm. It catalyses the reaction Specifically hydrolyzes mismatched double-stranded DNA and polynucleotides, releasing free uracil.. Its function is as follows. Excises ethenocytosine and uracil, which can arise by alkylation or deamination of cytosine, respectively, from the corresponding mispairs with guanine in ds-DNA. It is capable of hydrolyzing the carbon-nitrogen bond between the sugar-phosphate backbone of the DNA and the mispaired base. The complementary strand guanine functions in substrate recognition. Required for DNA damage lesion repair in stationary-phase cells. The polypeptide is G/U mismatch-specific DNA glycosylase (Salmonella agona (strain SL483)).